The primary structure comprises 637 residues: 1-deoxy-D-xylulose-5-phosphate synthase (637 aa).

Thiamine diphosphate contacts are provided by residues histidine 76 and 117 to 119 (GHS). Aspartate 148 serves as a coordination point for Mg(2+). Residues 149–150 (GA), asparagine 177, tyrosine 294, and glutamate 381 contribute to the thiamine diphosphate site. Asparagine 177 serves as a coordination point for Mg(2+).

The protein belongs to the transketolase family. DXPS subfamily. Homodimer. Requires Mg(2+) as cofactor. It depends on thiamine diphosphate as a cofactor.

It carries out the reaction D-glyceraldehyde 3-phosphate + pyruvate + H(+) = 1-deoxy-D-xylulose 5-phosphate + CO2. It functions in the pathway metabolic intermediate biosynthesis; 1-deoxy-D-xylulose 5-phosphate biosynthesis; 1-deoxy-D-xylulose 5-phosphate from D-glyceraldehyde 3-phosphate and pyruvate: step 1/1. Catalyzes the acyloin condensation reaction between C atoms 2 and 3 of pyruvate and glyceraldehyde 3-phosphate to yield 1-deoxy-D-xylulose-5-phosphate (DXP). The sequence is that of 1-deoxy-D-xylulose-5-phosphate synthase from Neisseria meningitidis serogroup C / serotype 2a (strain ATCC 700532 / DSM 15464 / FAM18).